The following is a 445-amino-acid chain: Xylose isomerase (445 aa).

Catalysis depends on residues His-107 and Asp-110. Mg(2+)-binding residues include Glu-238, Glu-274, His-277, Asp-302, Asp-313, Asp-315, and Asp-345.

Belongs to the xylose isomerase family. In terms of assembly, homotetramer. Requires Mg(2+) as cofactor.

The protein localises to the cytoplasm. The catalysed reaction is alpha-D-xylose = alpha-D-xylulofuranose. The polypeptide is Xylose isomerase (Bacillus cereus (strain ATCC 10987 / NRS 248)).